The sequence spans 795 residues: Lon protease (795 aa).

Residues 7 to 213 form the Lon N-terminal domain; that stretch reads SQILVVRGQV…KIIQAGIEDL (207 aa). ATP is bound at residue 379 to 386; that stretch reads GPPGVGKS. In terms of domain architecture, Lon proteolytic spans 615–795; that stretch reads VSLPGIVNGM…YSDIYNKLFS (181 aa). Residues Ser702 and Lys745 contribute to the active site.

This sequence belongs to the peptidase S16 family. Homohexamer. Organized in a ring with a central cavity.

The protein localises to the cytoplasm. It catalyses the reaction Hydrolysis of proteins in presence of ATP.. In terms of biological role, ATP-dependent serine protease that mediates the selective degradation of mutant and abnormal proteins as well as certain short-lived regulatory proteins. Required for cellular homeostasis and for survival from DNA damage and developmental changes induced by stress. Degrades polypeptides processively to yield small peptide fragments that are 5 to 10 amino acids long. Binds to DNA in a double-stranded, site-specific manner. This Mycoplasma genitalium (strain ATCC 33530 / DSM 19775 / NCTC 10195 / G37) (Mycoplasmoides genitalium) protein is Lon protease.